A 261-amino-acid polypeptide reads, in one-letter code: Glutathione S-transferase theta-1 (261 aa).

One can recognise a GST N-terminal domain in the interval 2–101; sequence GLELYLDLLS…YLSRKYNTPD (100 aa). Glutathione is bound by residues 72-73 and 85-86; these read KV and EC. The GST C-terminal domain occupies 107-248; that stretch reads DIKKRAQVDE…LSNIQIDPQL (142 aa).

The protein belongs to the GST superfamily. Theta family. As to quaternary structure, homodimer.

It localises to the cytoplasm. The catalysed reaction is RX + glutathione = an S-substituted glutathione + a halide anion + H(+). Its function is as follows. Conjugation of reduced glutathione to a wide number of exogenous and endogenous hydrophobic electrophiles. This chain is Glutathione S-transferase theta-1 (GSTT1), found in Gallus gallus (Chicken).